The primary structure comprises 433 residues: Serine hydroxymethyltransferase (433 aa).

Residue 121–123 (AHV) participates in (6S)-5,6,7,8-tetrahydrofolate binding. Lys-227 carries the post-translational modification N6-(pyridoxal phosphate)lysine. Glu-243 is a binding site for (6S)-5,6,7,8-tetrahydrofolate.

The protein belongs to the SHMT family. Homodimer. It depends on pyridoxal 5'-phosphate as a cofactor.

Its subcellular location is the cytoplasm. It participates in amino-acid biosynthesis; glycine biosynthesis; glycine from L-serine: step 1/1. Functionally, catalyzes the reversible interconversion of serine and glycine with a modified folate serving as the one-carbon carrier. Also exhibits a pteridine-independent aldolase activity toward beta-hydroxyamino acids, producing glycine and aldehydes, via a retro-aldol mechanism. The sequence is that of Serine hydroxymethyltransferase from Saccharolobus islandicus (strain Y.G.57.14 / Yellowstone #1) (Sulfolobus islandicus).